A 447-amino-acid chain; its full sequence is 2-oxoadipate dioxygenase/decarboxylase (447 aa).

Residues His68, Arg72, and His224 each coordinate 2-oxoadipate. His68 is a Fe(2+) binding site. Fe(2+) contacts are provided by His224 and Glu290. Residue Val391 participates in 2-oxoadipate binding.

Belongs to the 2-oxoadipate dioxygenase/decarboxylase family. It depends on Fe(2+) as a cofactor.

The catalysed reaction is 2-oxoadipate + O2 = (R)-2-hydroxyglutarate + CO2. In terms of biological role, catalyzes the decarboxylation and hydroxylation of 2-oxoadipate (2OA) to form D-2-hydroxyglutarate (D-2-HGA). The protein is 2-oxoadipate dioxygenase/decarboxylase (ydcJ) of Escherichia coli (strain K12).